We begin with the raw amino-acid sequence, 404 residues long: Probable tRNA sulfurtransferase (404 aa).

A THUMP domain is found at 60–165; it reads RSVIEALKPV…DEAAYLSHED (106 aa). ATP is bound by residues 183-184, 208-209, Arg-265, Gly-287, and Gln-296; these read ML and HF.

The protein belongs to the ThiI family.

The protein localises to the cytoplasm. It catalyses the reaction [ThiI sulfur-carrier protein]-S-sulfanyl-L-cysteine + a uridine in tRNA + 2 reduced [2Fe-2S]-[ferredoxin] + ATP + H(+) = [ThiI sulfur-carrier protein]-L-cysteine + a 4-thiouridine in tRNA + 2 oxidized [2Fe-2S]-[ferredoxin] + AMP + diphosphate. The catalysed reaction is [ThiS sulfur-carrier protein]-C-terminal Gly-Gly-AMP + S-sulfanyl-L-cysteinyl-[cysteine desulfurase] + AH2 = [ThiS sulfur-carrier protein]-C-terminal-Gly-aminoethanethioate + L-cysteinyl-[cysteine desulfurase] + A + AMP + 2 H(+). It participates in cofactor biosynthesis; thiamine diphosphate biosynthesis. Functionally, catalyzes the ATP-dependent transfer of a sulfur to tRNA to produce 4-thiouridine in position 8 of tRNAs, which functions as a near-UV photosensor. Also catalyzes the transfer of sulfur to the sulfur carrier protein ThiS, forming ThiS-thiocarboxylate. This is a step in the synthesis of thiazole, in the thiamine biosynthesis pathway. The sulfur is donated as persulfide by IscS. This chain is Probable tRNA sulfurtransferase, found in Streptococcus equi subsp. zooepidemicus (strain H70).